The following is a 148-amino-acid chain: Large ribosomal subunit protein uL15 (148 aa).

Positions 1-47 (MTKLEDLRPTPGSVKPRKRVGRGIGSGHGKTSGRGHKGQKSRGSGKV) are disordered. Residues 31–45 (TSGRGHKGQKSRGSG) are compositionally biased toward basic residues.

Belongs to the universal ribosomal protein uL15 family. Part of the 50S ribosomal subunit.

Functionally, binds to the 23S rRNA. This chain is Large ribosomal subunit protein uL15, found in Pseudothermotoga lettingae (strain ATCC BAA-301 / DSM 14385 / NBRC 107922 / TMO) (Thermotoga lettingae).